A 582-amino-acid polypeptide reads, in one-letter code: Mitogen-activated protein kinase 17 (582 aa).

The interval S22 to D61 is disordered. Over residues D33 to D45 the composition is skewed to basic and acidic residues. The region spanning Y105–F396 is the Protein kinase domain. ATP-binding positions include I111–V119 and K134. Residue D231 is the Proton acceptor of the active site. A Phosphothreonine modification is found at T267. A TXY motif is present at residues T267–Y269. Y269 bears the Phosphotyrosine mark. Disordered stretches follow at residues E474–H502 and I542–T582. Polar residues predominate over residues S482–S491. Positions P493 to H502 are enriched in basic and acidic residues. Positions D557–E572 are enriched in acidic residues.

The protein belongs to the protein kinase superfamily. CMGC Ser/Thr protein kinase family. MAP kinase subfamily. Post-translationally, dually phosphorylated on Thr-267 and Tyr-269, which activates the enzyme.

It catalyses the reaction L-seryl-[protein] + ATP = O-phospho-L-seryl-[protein] + ADP + H(+). The enzyme catalyses L-threonyl-[protein] + ATP = O-phospho-L-threonyl-[protein] + ADP + H(+). Its activity is regulated as follows. Activated by threonine and tyrosine phosphorylation. This chain is Mitogen-activated protein kinase 17 (MPK17), found in Oryza sativa subsp. japonica (Rice).